A 271-amino-acid polypeptide reads, in one-letter code: Undecaprenyl-diphosphatase (271 aa).

Helical transmembrane passes span 5–25, 45–65, 86–106, 114–134, 149–169, 189–209, 226–246, and 251–271; these read YALFVAFVLGIVEGLTEFLPV, AATFEVVIQMGSILAVVAVFW, TLSLVHIILGMLPAVIIGLGI, LFGPETVMYALVAGGILLIIA, ISYKQAFGIGLFQCLALWPGF, AAEFSFILAVPMMVAASGLDL, VGFITAFVVAMIAIKTFLALI, and FIPFAIYRFIVAFAVYLVFVA.

It belongs to the UppP family.

Its subcellular location is the cell inner membrane. The catalysed reaction is di-trans,octa-cis-undecaprenyl diphosphate + H2O = di-trans,octa-cis-undecaprenyl phosphate + phosphate + H(+). Catalyzes the dephosphorylation of undecaprenyl diphosphate (UPP). Confers resistance to bacitracin. In Aeromonas salmonicida (strain A449), this protein is Undecaprenyl-diphosphatase.